We begin with the raw amino-acid sequence, 137 residues long: Small ribosomal subunit protein uS12 (137 aa).

Asp-89 is modified (3-methylthioaspartic acid). The tract at residues 104-137 is disordered; that stretch reads TAGVNGRKQSRSKYGAKRPKPGQAAAAPAKGKKK. A compositionally biased stretch (basic residues) spans 111–123; that stretch reads KQSRSKYGAKRPK. Low complexity predominate over residues 124–137; that stretch reads PGQAAAAPAKGKKK.

This sequence belongs to the universal ribosomal protein uS12 family. In terms of assembly, part of the 30S ribosomal subunit. Contacts proteins S8 and S17. May interact with IF1 in the 30S initiation complex.

In terms of biological role, with S4 and S5 plays an important role in translational accuracy. Interacts with and stabilizes bases of the 16S rRNA that are involved in tRNA selection in the A site and with the mRNA backbone. Located at the interface of the 30S and 50S subunits, it traverses the body of the 30S subunit contacting proteins on the other side and probably holding the rRNA structure together. The combined cluster of proteins S8, S12 and S17 appears to hold together the shoulder and platform of the 30S subunit. The sequence is that of Small ribosomal subunit protein uS12 from Cytophaga hutchinsonii (strain ATCC 33406 / DSM 1761 / CIP 103989 / NBRC 15051 / NCIMB 9469 / D465).